Reading from the N-terminus, the 350-residue chain is Dihydroorotase (350 aa).

The Zn(2+) site is built by H13 and H15. Substrate contacts are provided by residues 15–17 (HLR) and N41. Positions 99, 136, and 174 each coordinate Zn(2+). An N6-carboxylysine modification is found at K99. H136 provides a ligand contact to substrate. A substrate-binding site is contributed by L219. D247 lines the Zn(2+) pocket. Residue D247 is part of the active site. 2 residues coordinate substrate: H251 and A263.

This sequence belongs to the metallo-dependent hydrolases superfamily. DHOase family. Class II DHOase subfamily. Homodimer. Zn(2+) is required as a cofactor.

The enzyme catalyses (S)-dihydroorotate + H2O = N-carbamoyl-L-aspartate + H(+). Its pathway is pyrimidine metabolism; UMP biosynthesis via de novo pathway; (S)-dihydroorotate from bicarbonate: step 3/3. Its function is as follows. Catalyzes the reversible cyclization of carbamoyl aspartate to dihydroorotate. In Allorhizobium ampelinum (strain ATCC BAA-846 / DSM 112012 / S4) (Agrobacterium vitis (strain S4)), this protein is Dihydroorotase.